The sequence spans 875 residues: Pyrogallol hydroxytransferase large subunit (875 aa).

Residues 82–104 form a disordered region; that stretch reads RKSFDPNGERNPQLRGAGLSKQD. Residue serine 175 coordinates Mo-bis(molybdopterin guanine dinucleotide).

The protein belongs to the prokaryotic molybdopterin-containing oxidoreductase family. As to quaternary structure, heterodimer of a large and a small subunit. It depends on Mo-bis(molybdopterin guanine dinucleotide) as a cofactor.

It carries out the reaction 1,2,3,5-tetrahydroxybenzene + 1,2,3-trihydroxybenzene = 1,2,3,5-tetrahydroxybenzene + 1,3,5-trihydroxybenzene. In terms of biological role, isomerization of pyrogallol to phloroglucin. This Pelobacter acidigallici protein is Pyrogallol hydroxytransferase large subunit (athL).